The primary structure comprises 147 residues: Glucosamine 6-phosphate N-acetyltransferase (147 aa).

Residues 7 to 147 form the N-acetyltransferase domain; that stretch reads LELRVLEESD…AHERQMRLDL (141 aa). Residues T28 and 86–88 each bind D-glucosamine 6-phosphate; that span reads EDV. Residues 88–90 and 96–101 each bind acetyl-CoA; these read VVV and GAGLGK. Residues 117-118 and D122 contribute to the D-glucosamine 6-phosphate site; that span reads YK. Position 131–133 (131–133) interacts with acetyl-CoA; the sequence is YEK.

It belongs to the acetyltransferase family. GNA1 subfamily. In terms of assembly, homodimer. In terms of processing, contains poly-N-acetyllactosamines.

Its subcellular location is the glycosome. The catalysed reaction is D-glucosamine 6-phosphate + acetyl-CoA = N-acetyl-D-glucosamine 6-phosphate + CoA + H(+). It participates in nucleotide-sugar biosynthesis; UDP-N-acetyl-alpha-D-glucosamine biosynthesis; N-acetyl-alpha-D-glucosamine 1-phosphate from alpha-D-glucosamine 6-phosphate (route I): step 1/2. Involved in the biosynthesis of UDP-N-acetyl-alpha-D-glucosamine. Catalyzes the formation of N-acetyl-D-glucosamine 6-phosphate from acetyl-coenzyme A (acetyl-CoA) and D-glucosamine 6-phosphate. The polypeptide is Glucosamine 6-phosphate N-acetyltransferase (Trypanosoma brucei brucei).